We begin with the raw amino-acid sequence, 542 residues long: Esterase 6 (542 aa).

The signal sequence occupies residues 1–19 (MNYVGLIIVLSCLWLGSNA). N-linked (GlcNAc...) asparagine glycosylation occurs at Asn40. A disulfide bridge connects residues Cys84 and Cys103. The active-site Acyl-ester intermediate is the Ser207. Cys259 and Cys271 are joined by a disulfide. Residues Asn418 and Asn454 are each glycosylated (N-linked (GlcNAc...) asparagine). His464 acts as the Charge relay system in catalysis. A disulfide bridge connects residues Cys512 and Cys533.

Belongs to the type-B carboxylesterase/lipase family. Monomer.

The protein localises to the secreted. It carries out the reaction a carboxylic ester + H2O = an alcohol + a carboxylate + H(+). In terms of biological role, transferred from the ejaculatory bulbs of males to the female genitals upon copulation, plays an important role in the reproductive biology. The sequence is that of Esterase 6 (Est-6) from Drosophila simulans (Fruit fly).